Reading from the N-terminus, the 356-residue chain is Malate dehydrogenase, glyoxysomal (356 aa).

The transit peptide at Met1–Cys36 directs the protein to the glyoxysome. Residues Gly51–Gly57 and Asp77 each bind NAD(+). Substrate is bound by residues Arg124 and Arg130. Residues Asn137 and Ile160–Asn162 each bind NAD(+). Substrate contacts are provided by Asn162 and Arg196. His220 (proton acceptor) is an active-site residue. Met271 contacts NAD(+).

This sequence belongs to the LDH/MDH superfamily. MDH type 1 family. As to quaternary structure, homodimer.

The protein resides in the glyoxysome. It catalyses the reaction (S)-malate + NAD(+) = oxaloacetate + NADH + H(+). This chain is Malate dehydrogenase, glyoxysomal, found in Oryza sativa subsp. japonica (Rice).